A 201-amino-acid chain; its full sequence is Small ribosomal subunit protein uS4c (201 aa).

One can recognise an S4 RNA-binding domain in the interval 89-157 (MRLDNILFRL…VQNYIASSDP (69 aa)).

This sequence belongs to the universal ribosomal protein uS4 family. Part of the 30S ribosomal subunit. Contacts protein S5. The interaction surface between S4 and S5 is involved in control of translational fidelity.

It localises to the plastid. The protein localises to the chloroplast. In terms of biological role, one of the primary rRNA binding proteins, it binds directly to 16S rRNA where it nucleates assembly of the body of the 30S subunit. Functionally, with S5 and S12 plays an important role in translational accuracy. This chain is Small ribosomal subunit protein uS4c (rps4), found in Hordeum vulgare (Barley).